The primary structure comprises 1046 residues: uncharacterized protein (1046 aa).

A compositionally biased stretch (low complexity) spans 594–615; sequence LNSIPSDSSSSGSSRKSSPRGS. The tract at residues 594 to 622 is disordered; the sequence is LNSIPSDSSSSGSSRKSSPRGSPNLGEAP.

This is an uncharacterized protein from Invertebrate iridescent virus 6 (IIV-6).